Here is a 58-residue protein sequence, read N- to C-terminus: Large ribosomal subunit protein eL37 (58 aa).

The segment covering 1–17 (MTGAGTPSQGKKNTTTH) has biased composition (polar residues). Positions 1–26 (MTGAGTPSQGKKNTTTHTKCRRCGEK) are disordered. The Zn(2+) site is built by cysteine 20, cysteine 23, cysteine 35, and cysteine 38. The C4-type zinc-finger motif lies at 20–38 (CRRCGEKSYHTKKKVCSSC).

The protein belongs to the eukaryotic ribosomal protein eL37 family. The cofactor is Zn(2+).

Its function is as follows. Binds to the 23S rRNA. In Halobacterium salinarum (strain ATCC 29341 / DSM 671 / R1), this protein is Large ribosomal subunit protein eL37.